Reading from the N-terminus, the 359-residue chain is Protein disulfide-isomerase C17H9.14c (359 aa).

The signal sequence occupies residues 1-19 (MRLPLLSFVIFALFALVFA). Thioredoxin domains lie at 20–130 (SGVV…EKTG) and 134–250 (RKIV…KKSG). Catalysis depends on nucleophile residues Cys-51 and Cys-54. Disulfide bonds link Cys-51–Cys-54 and Cys-170–Cys-173.

The protein belongs to the protein disulfide isomerase family.

It carries out the reaction Catalyzes the rearrangement of -S-S- bonds in proteins.. Participates in the folding of proteins containing disulfide bonds, may be involved in glycosylation, prolyl hydroxylation and triglyceride transfer. This chain is Protein disulfide-isomerase C17H9.14c, found in Schizosaccharomyces pombe (strain 972 / ATCC 24843) (Fission yeast).